A 251-amino-acid polypeptide reads, in one-letter code: NAD kinase (251 aa).

Aspartate 51 functions as the Proton acceptor in the catalytic mechanism. Residues 51–52 (DG), lysine 56, 113–114 (NE), lysine 124, histidine 140, aspartate 142, 153–158 (TGYSLS), and alanine 177 each bind NAD(+).

It belongs to the NAD kinase family. It depends on a divalent metal cation as a cofactor.

Its subcellular location is the cytoplasm. The catalysed reaction is NAD(+) + ATP = ADP + NADP(+) + H(+). Its function is as follows. Involved in the regulation of the intracellular balance of NAD and NADP, and is a key enzyme in the biosynthesis of NADP. Catalyzes specifically the phosphorylation on 2'-hydroxyl of the adenosine moiety of NAD to yield NADP. This chain is NAD kinase, found in Thermosipho melanesiensis (strain DSM 12029 / CIP 104789 / BI429).